A 75-amino-acid chain; its full sequence is Defensin-like protein (75 aa).

Positions 1 to 24 are cleaved as a signal peptide; sequence MEKKSIAGLCFLFLVLFVAQEVVV. 4 disulfide bridges follow: Cys31/Cys75, Cys42/Cys63, Cys48/Cys69, and Cys52/Cys71.

It belongs to the DEFL family.

The protein resides in the secreted. Its function is as follows. This protein is required for germination. In Vigna unguiculata (Cowpea), this protein is Defensin-like protein.